The sequence spans 313 residues: MSGIDPKRFGKVAVLFGGESAEREVSLTSGRLVLQGLRDAGVDAHPFDPAERPLSALKDEGFVRAFNALHGGYGENGQIQGALDFYGIRYTGSGVLGSALGLDKFRTKLVWQQTGVPTPPFETVMRGDDLAARATDIVAKLGLPLFVKPASEGSSVAVLKVKTADALPAALEEAATHDKIVIVEKSIEGGGEYTACIAGDLDLPLIKIVPAGEFYDYHAKYVADDTQYLIPCGLPAQQEAELKRIARRAFDVLGCTDWGRADFMLDAAGNAYFLEVNTAPGMTDHSLPPKAARAVGISYSELVVKVLSLTLND.

The ATP-grasp domain occupies 108–308; it reads KLVWQQTGVP…YSELVVKVLS (201 aa). 138 to 193 is an ATP binding site; the sequence is VAKLGLPLFVKPASEGSSVAVLKVKTADALPAALEEAATHDKIVIVEKSIEGGGEY. Positions 262, 275, and 277 each coordinate Mg(2+).

It belongs to the D-alanine--D-alanine ligase family. Requires Mg(2+) as cofactor. Mn(2+) is required as a cofactor.

The protein localises to the cytoplasm. The catalysed reaction is 2 D-alanine + ATP = D-alanyl-D-alanine + ADP + phosphate + H(+). It participates in cell wall biogenesis; peptidoglycan biosynthesis. In terms of biological role, cell wall formation. This chain is D-alanine--D-alanine ligase, found in Burkholderia cenocepacia (strain ATCC BAA-245 / DSM 16553 / LMG 16656 / NCTC 13227 / J2315 / CF5610) (Burkholderia cepacia (strain J2315)).